Consider the following 354-residue polypeptide: UPF0496 protein At4g34330 (354 aa).

A run of 2 helical transmembrane segments spans residues Ile200–Ala220 and Pro222–Ile242. The stretch at Ala270 to Thr341 forms a coiled coil.

The protein belongs to the UPF0496 family.

The protein resides in the membrane. The chain is UPF0496 protein At4g34330 from Arabidopsis thaliana (Mouse-ear cress).